The sequence spans 687 residues: Putative ammonium transporter 3 (687 aa).

A run of 11 helical transmembrane segments spans residues 39-59 (AVWIISSSFIIFTMHSGFGLL), 77-97 (VVDVVFGGLSYWSCGFGFSYG), 134-154 (ASFLFQLSLATTASTIVSGAV), 162-182 (SYILLGCIVILIQALPAHWVW), 196-216 (FAGCSAVHLVGGIIGLIATVF), 240-260 (LGTFLLWWGWFGINAGSVWGI), 272-292 (AVATIMASIGGGATAITISFV), 299-319 (VNFLINGILSSIVSITAICAV), 323-343 (WHALVIGSISSVFSIAVLPLL), 352-372 (VGIVPIHLTSSIWGMIAVGIF), and 404-424 (CTAAILIYSATTGFLALFLIS). 3 disordered regions span residues 521–544 (RTNATESNGTGAPKRSNGPAFNNQ), 549–568 (AVSSTVSTARNGPSTGRRTE), and 592–687 (PPEE…NPPV). A compositionally biased stretch (polar residues) spans 549–564 (AVSSTVSTARNGPSTG). Low complexity-rich tracts occupy residues 614 to 632 (SPSSSTSRRSISIRSSPSI) and 648 to 665 (STASATSIISKKSSKNST).

This sequence belongs to the ammonia transporter channel (TC 1.A.11.2) family.

The protein resides in the membrane. Functionally, involved in the uptake of ammonia. In Caenorhabditis elegans, this protein is Putative ammonium transporter 3 (amt-3).